Consider the following 66-residue polypeptide: Cytochrome c oxidase subunit 26, mitochondrial (66 aa).

A mitochondrion-targeting transit peptide spans 1-8; sequence MFFSQVLR. Residues 9 to 27 are Mitochondrial matrix-facing; it reads SSARAAPIKRYTGGRIGES. The chain crosses the membrane as a helical span at residues 28-64; it reads WVITEGRRLIPEIFQWSAVLSVCLGWPGAVYFFSKAR. Topologically, residues 65-66 are mitochondrial intermembrane; sequence KA.

The protein belongs to the fungal cytochrome c oxidase subunit 26 family. In terms of assembly, component of the cytochrome c oxidase (complex IV, CIV), a multisubunit enzyme composed of 12 subunits. The complex is composed of a catalytic core of 3 subunits COX1, COX2 and COX3, encoded in the mitochondrial DNA, and 9 supernumerary subunits COX4, COX5A (or COX5B), COX6, COX7, COX8, COX9, COX12, COX13 and COX26, which are encoded in the nuclear genome. The complex exists as a monomer or a dimer and forms supercomplexes (SCs) in the inner mitochondrial membrane with a dimer of ubiquinol-cytochrome c oxidoreductase (cytochrome b-c1 complex, complex III, CIII), resulting in 2 different assemblies (supercomplexes III(2)IV and III(2)IV(2)).

The protein localises to the mitochondrion inner membrane. Functionally, component of the cytochrome c oxidase, the last enzyme in the mitochondrial electron transport chain which drives oxidative phosphorylation. The respiratory chain contains 3 multisubunit complexes succinate dehydrogenase (complex II, CII), ubiquinol-cytochrome c oxidoreductase (cytochrome b-c1 complex, complex III, CIII) and cytochrome c oxidase (complex IV, CIV), that cooperate to transfer electrons derived from NADH and succinate to molecular oxygen, creating an electrochemical gradient over the inner membrane that drives transmembrane transport and the ATP synthase. Cytochrome c oxidase is the component of the respiratory chain that catalyzes the reduction of oxygen to water. Electrons originating from reduced cytochrome c in the intermembrane space (IMS) are transferred via the dinuclear copper A center (CU(A)) of COX2 and heme A of COX1 to the active site in COX1, a binuclear center (BNC) formed by heme A3 and copper B (CU(B)). The BNC reduces molecular oxygen to 2 water molecules using 4 electrons from cytochrome c in the IMS and 4 protons from the mitochondrial matrix. The protein is Cytochrome c oxidase subunit 26, mitochondrial (COX26) of Saccharomyces cerevisiae (strain ATCC 204508 / S288c) (Baker's yeast).